Reading from the N-terminus, the 362-residue chain is Molybdenum import ATP-binding protein ModC (362 aa).

The ABC transporter domain occupies 1 to 236 (MTASGLYLNL…TQSPTAQGED (236 aa)). 36–43 (GPSGSGKT) provides a ligand contact to ATP. The Mop domain occupies 297–362 (DSTILNKLAA…AQVKSVAIVG (66 aa)).

The protein belongs to the ABC transporter superfamily. Molybdate importer (TC 3.A.1.8) family. The complex is composed of two ATP-binding proteins (ModC), two transmembrane proteins (ModB) and a solute-binding protein (ModA).

The protein localises to the cell inner membrane. It carries out the reaction molybdate(out) + ATP + H2O = molybdate(in) + ADP + phosphate + H(+). Functionally, part of the ABC transporter complex ModABC involved in molybdenum import. Responsible for energy coupling to the transport system. This is Molybdenum import ATP-binding protein ModC from Saccharophagus degradans (strain 2-40 / ATCC 43961 / DSM 17024).